Reading from the N-terminus, the 338-residue chain is MKHKGAILIVIGVVALAAMILIIGPGEIEDALRKADPVYVLMAVVLEFIILALFTLRWSITTRAVSIDVGKRHLFPMLLVGMAINNLTPSARGGGEPVRAYMLGKYSRASMESAFATVIADRGLDTFPFIFLAVLTIIGIVLYFDLSRWILAALIASVVIIVVAFFLALYVSVDRDAGERITGWILGVVKRFYRKNHERLERRVRSALHEFQSTMRMMLKEKNVLVYGIPISFLIWILEIIRVYLIFTAFGTDISLLVIAEVFILATLIGMIPLLPGGLGAVDGIMIVFYSYAGVSPSVSAAATVVERLISFWMISAMGVAAIPYFGSSVSEKLMDKL.

8 helical membrane passes run 6–26 (AILI…IGPG), 36–56 (DPVY…LFTL), 124–144 (LDTF…VLYF), 149–169 (WILA…FLAL), 231–251 (ISFL…TAFG), 254–274 (ISLL…MIPL), 275–295 (LPGG…YAGV), and 310–330 (ISFW…GSSV).

Belongs to the UPF0104 family.

The protein resides in the cell membrane. The sequence is that of UPF0104 membrane protein MTH_1261 from Methanothermobacter thermautotrophicus (strain ATCC 29096 / DSM 1053 / JCM 10044 / NBRC 100330 / Delta H) (Methanobacterium thermoautotrophicum).